We begin with the raw amino-acid sequence, 313 residues long: Protein FixB (313 aa).

FAD is bound at residue L255–D283.

This sequence belongs to the ETF alpha-subunit/FixB family. Heterodimer of FixA and FixB.

It functions in the pathway amine and polyamine metabolism; carnitine metabolism. Its function is as follows. Required for anaerobic carnitine reduction. May bring reductant to CaiA. The polypeptide is Protein FixB (Escherichia coli O6:K15:H31 (strain 536 / UPEC)).